A 624-amino-acid polypeptide reads, in one-letter code: Sulfite reductase [ferredoxin] (624 aa).

Positions 52–137 (YQQDNRDNRV…ENLGSTISAC (86 aa)) form a cross-link, 3'-(S-cysteinyl)-tyrosine (Tyr-Cys). Positions 446, 452, 491, and 495 each coordinate [4Fe-4S] cluster. Cysteine 495 is a siroheme binding site.

Belongs to the nitrite and sulfite reductase 4Fe-4S domain family. Monomer. The cofactor is siroheme. Requires [4Fe-4S] cluster as cofactor.

It catalyses the reaction hydrogen sulfide + 6 oxidized [2Fe-2S]-[ferredoxin] + 3 H2O = sulfite + 6 reduced [2Fe-2S]-[ferredoxin] + 7 H(+). Its function is as follows. Catalyzes the reduction of sulfite to sulfide, a step in the biosynthesis of sulfur-containing amino acids and cofactors. The chain is Sulfite reductase [ferredoxin] (sir) from Synechococcus elongatus (strain ATCC 33912 / PCC 7942 / FACHB-805) (Anacystis nidulans R2).